Reading from the N-terminus, the 344-residue chain is Trace amine-associated receptor 8a (344 aa).

The Extracellular portion of the chain corresponds to 1 to 33; sequence MTSNFSQAPLQLCYENVNASCIKTPYSPGLRVL. N-linked (GlcNAc...) asparagine glycosylation is found at asparagine 4 and asparagine 18. 2 disulfides stabilise this stretch: cysteine 21/cysteine 185 and cysteine 96/cysteine 189. A helical membrane pass occupies residues 34–54; the sequence is LYMVFGFGAVLAVCGNLLVVI. Over 55-67 the chain is Cytoplasmic; the sequence is SVLHFKQLHSPAN. Residues 68-88 form a helical membrane-spanning segment; sequence FLIASLASADFLVGISVMPFS. The Extracellular portion of the chain corresponds to 89 to 102; it reads MVRSIESCWYFGDT. Residues 103 to 127 form a helical membrane-spanning segment; sequence FCSLHSCCDAAFCYSSLFHLCFISV. Residues 128–146 lie on the Cytoplasmic side of the membrane; it reads DRYIAVTDPLVYPTKFTVS. A helical transmembrane segment spans residues 147–167; the sequence is VSGICISISWILPLVYSSAVF. At 168-196 the chain is on the extracellular side; it reads YTGISATGIENLVSALNCVGGCQIVVNQD. The chain crosses the membrane as a helical span at residues 197 to 217; that stretch reads WVLIDFLLFLIPTLVMIILYS. Residues 218-260 lie on the Cytoplasmic side of the membrane; sequence KIFLVAKQQAVKIETSISGSKGESSLESHKARVAKRERKAAKT. A helical transmembrane segment spans residues 261 to 281; the sequence is LGVTVVAFMVSWLPYTIDTLI. Residues 282-291 lie on the Extracellular side of the membrane; the sequence is DAFMGFITPA. A helical membrane pass occupies residues 292–314; sequence YVYEICCWSAYYNSAMNPLIYAF. At 315–344 the chain is on the cytoplasmic side; that stretch reads FYPWFRKAIKLILSGEILKSHSSTMSLFSE.

It belongs to the G-protein coupled receptor 1 family.

The protein resides in the cell membrane. In terms of biological role, olfactory receptor activated by trace amines. Trace amine compounds are enriched in animal body fluids and act on trace amine-associated receptors (TAARs) to elicit both intraspecific and interspecific innate behaviors. Ligand-binding causes a conformation change that triggers signaling via G(s)-class of G alpha proteins (GNAL or GNAS). In Rattus norvegicus (Rat), this protein is Trace amine-associated receptor 8a.